Here is a 95-residue protein sequence, read N- to C-terminus: Integration host factor subunit beta (95 aa).

A disordered region spans residues 56–76 (RAPRTGRNPKTGSSVDLEGKY).

The protein belongs to the bacterial histone-like protein family. Heterodimer of an alpha and a beta chain.

This protein is one of the two subunits of integration host factor, a specific DNA-binding protein that functions in genetic recombination as well as in transcriptional and translational control. The polypeptide is Integration host factor subunit beta (Shewanella baltica (strain OS223)).